A 2957-amino-acid polypeptide reads, in one-letter code: Toxin PAU_02230 (2957 aa).

Positions 949–968 (TSVSPAETAQSTPEPLSDFA) are disordered. Residues 2115–2144 (EWFKHSETGLKGGGPIDDIRKYIARKSAIK) form a membrane localization domain that interacts with the inner leaflet of the plasma membrane region. Residues 2115-2449 (EWFKHSETGL…TSTIVTPLAP (335 aa)) form a tyrosine glycosyltransferase PaToxG region. UDP-N-acetyl-alpha-D-glucosamine contacts are provided by residues 2169 to 2171 (IWI) and 2259 to 2260 (SD). Positions 2276 and 2278 each coordinate a divalent metal cation. Positions 2276–2279 (DIDD) match the DxDD motif motif. Asparagine 2312 lines the UDP-N-acetyl-alpha-D-glucosamine pocket. The interval 2450-2672 (KTEMLPPVPS…NYSVNPTAEN (223 aa)) is sseI-like deamidase PaToxD. Residues cysteine 2509, histidine 2547, and aspartate 2562 each act as for deamidase activity in the active site. The disordered stretch occupies residues 2667 to 2705 (NPTAENLSPPPPPPIPSHGQVPKTVTPPPPPMRSPLSLS).

A divalent metal cation serves as cofactor.

It localises to the secreted. The protein resides in the host cell membrane. It catalyses the reaction L-tyrosyl-[protein] + UDP-N-acetyl-alpha-D-glucosamine = O-(N-acetyl-alpha-D-glucosaminyl)-L-tyrosyl-[protein] + UDP + H(+). The enzyme catalyses L-glutaminyl-[protein] + H2O = L-glutamyl-[protein] + NH4(+). Its function is as follows. Toxin that acts on host cells by modifying Rho proteins by tyrosine GlcNAcylation and heterotrimeric G alpha proteins by deamidation. Catalyzes the mono-O-GlcNAcylation of small GTPases of the Rho family (RhoA, RhoB, RhoC, Rac1, Rac2, Rac3, Cdc42) in eukaryotic host cells at the conserved tyrosine residue located in the switch I region (Tyr-32/34), using UDP-N-acetylglucosamine (UDP-GlcNAc) as the sugar donor; other GTPases of the Rho, Ras or Rab families are not substrates. Tyrosine glycosylation inhibits Rho activation and prevents interaction with downstream effectors, resulting in actin disassembly, inhibition of phagocytosis, cell rounding, and toxicity toward insects and mammalian cells. Also catalyzes the deamidation of the catalytic glutamine in heterotrimeric G alpha proteins (Gi, Gq/11), which blocks GTP hydrolysis and arrests the G proteins in a permanent active state leading to activation of Rho GTPases. Thus, PaTox hijacks host GTPase signaling in a bidirectional manner by deamidation-induced activation and glycosylation-induced inactivation of GTPases. This is Toxin PAU_02230 from Photorhabdus asymbiotica subsp. asymbiotica (strain ATCC 43949 / 3105-77) (Xenorhabdus luminescens (strain 2)).